A 146-amino-acid polypeptide reads, in one-letter code: Hemoglobin subunit beta-1 (146 aa).

Residues 2-146 form the Globin domain; the sequence is EWTDQERATI…VVSALGKQYH (145 aa). Residues His63 and His92 each contribute to the heme b site.

It belongs to the globin family. Hb1 is a heterotetramer of two alpha-1 chains and two beta-1 chains. Hb2 is a heterotetramer of two alpha-2 chains and two beta-1 chains. HbC is a heterotetramer of two alpha-1 chains and two beta-2 chains. As to expression, red blood cells.

In terms of biological role, involved in oxygen transport from gills to the various peripheral tissues. This is Hemoglobin subunit beta-1 from Eleginops maclovinus (Patagonian blennie).